The primary structure comprises 475 residues: Aspartyl/glutamyl-tRNA(Asn/Gln) amidotransferase subunit B (475 aa).

The protein belongs to the GatB/GatE family. GatB subfamily. As to quaternary structure, heterotrimer of A, B and C subunits.

It catalyses the reaction L-glutamyl-tRNA(Gln) + L-glutamine + ATP + H2O = L-glutaminyl-tRNA(Gln) + L-glutamate + ADP + phosphate + H(+). The enzyme catalyses L-aspartyl-tRNA(Asn) + L-glutamine + ATP + H2O = L-asparaginyl-tRNA(Asn) + L-glutamate + ADP + phosphate + 2 H(+). Allows the formation of correctly charged Asn-tRNA(Asn) or Gln-tRNA(Gln) through the transamidation of misacylated Asp-tRNA(Asn) or Glu-tRNA(Gln) in organisms which lack either or both of asparaginyl-tRNA or glutaminyl-tRNA synthetases. The reaction takes place in the presence of glutamine and ATP through an activated phospho-Asp-tRNA(Asn) or phospho-Glu-tRNA(Gln). This is Aspartyl/glutamyl-tRNA(Asn/Gln) amidotransferase subunit B from Macrococcus caseolyticus (strain JCSC5402) (Macrococcoides caseolyticum).